A 471-amino-acid polypeptide reads, in one-letter code: 7-hydroxymethyl chlorophyll a reductase, chloroplastic (471 aa).

A chloroplast-targeting transit peptide spans 1-44 (MARCISFLSTSSSLPCATKPPCCSVSSVLPSSPSSHQCRGRKTS).

This sequence belongs to the FrhB family. FAD is required as a cofactor. The cofactor is iron-sulfur cluster.

The protein resides in the plastid. It localises to the chloroplast. It carries out the reaction chlorophyll a + 2 oxidized [2Fe-2S]-[ferredoxin] + H2O = 7(1)-hydroxychlorophyll a + 2 reduced [2Fe-2S]-[ferredoxin] + 2 H(+). Its function is as follows. Probable iron-sulfur flavoprotein that converts 7-hydroxymethyl chlorophyll a to chlorophyll a using ferredoxin as a reducing equivalent. Catalyzes the reduction of a hydroxymethyl group to a methyl group. This Oryza sativa subsp. japonica (Rice) protein is 7-hydroxymethyl chlorophyll a reductase, chloroplastic (HCAR).